A 1249-amino-acid chain; its full sequence is Protein transport protein Sec31A (1249 aa).

WD repeat units follow at residues 4–47, 64–111, 120–160, 166–206, 209–254, 258–298, and 301–342; these read KEID…EIFE, SSSH…AGDK, KHTG…TPMT, QPPE…PIIK, DHSN…SPLR, NHAR…VLYE, and TNTQ…DGLR. Residues 161–470 form an interaction with SEC13 region; sequence PGAKTQPPED…IDASQTDFEK (310 aa). Residues 397 to 429 form a WD 8; interaction with SEC13 repeat; sequence SFSFGGKLVTFENVTGQPQQGAEQPRRQPVFIS. Arg423 carries the post-translational modification Asymmetric dimethylarginine. Ser526 and Ser531 each carry phosphoserine. Lys647 participates in a covalent cross-link: Glycyl lysine isopeptide (Lys-Gly) (interchain with G-Cter in ubiquitin). 3 disordered regions span residues 790-829, 842-940, and 954-1123; these read QGRS…VQSQ, TTWS…RYPN, and PHMY…PIGN. Residues 796–805 are compositionally biased toward polar residues; it reads GQESSRSSYE. At Ser799 the chain carries Phosphoserine. The tract at residues 800-1142 is interaction with PDCD6; sequence SRSSYEGQPL…TEKITKKPIP (343 aa). Residues 873–879 carry the ALG-2-binding site motif-2 (ABS-2) motif; sequence GFIMHGN. Over residues 898–908 the composition is skewed to pro residues; the sequence is QPPPYPQPQPY. 2 stretches are compositionally biased toward low complexity: residues 961 to 970 and 991 to 1007; these read PASSPTSSSA and PSSS…GTPP. Residues 1013-1024 show a composition bias toward polar residues; sequence PASQRTGPQNGW. The span at 1056-1074 shows a compositional bias: low complexity; it reads PGGDPQPQGLQQQPSASGP. A Phosphothreonine modification is found at Thr1190. Ser1192 carries the phosphoserine modification. Lys1246 participates in a covalent cross-link: Glycyl lysine isopeptide (Lys-Gly) (interchain with G-Cter in ubiquitin).

This sequence belongs to the WD repeat SEC31 family. As to quaternary structure, COPII is composed of at least 5 proteins: the SEC23/24 complex, the SEC13/31 complex and SAR1. SEC13 and SEC31 make a 2:2 tetramer that forms the edge element of the COPII outer coat. The tetramer self-assembles in multiple copies to form the complete polyhedral cage. Interacts (via WD 8) with SEC13. Interacts with PDCD6; interaction takes place in response to cytosolic calcium increase and leads to bridge together the BCR(KLHL12) complex and SEC31A, leading to monoubiquitination. Interacts with KLHL12. In terms of processing, monoubiquitinated by the BCR(KLHL12) E3 ubiquitin ligase complex, leading to regulate the size of COPII coats. Ubiquitously expressed.

It is found in the cytoplasm. It localises to the cytoplasmic vesicle. Its subcellular location is the COPII-coated vesicle membrane. The protein localises to the endoplasmic reticulum membrane. In terms of biological role, component of the coat protein complex II (COPII) which promotes the formation of transport vesicles from the endoplasmic reticulum (ER). The coat has two main functions, the physical deformation of the endoplasmic reticulum membrane into vesicles and the selection of cargo molecules. This chain is Protein transport protein Sec31A (Sec31a), found in Rattus norvegicus (Rat).